Here is an 848-residue protein sequence, read N- to C-terminus: Dynein axonemal intermediate chain 4 (848 aa).

2 disordered regions span residues 345–370 (SKAN…SETS) and 431–464 (EPEP…IHAE). Over residues 359-370 (PGSTTEKNSETS) the composition is skewed to polar residues. Positions 442–456 (ESAKHEEVEEESKKE) are enriched in basic and acidic residues. WD repeat units follow at residues 534 to 574 (QSPY…NVPV), 583 to 631 (KHLG…DCYD), 658 to 698 (SRQA…QYLD), 702 to 742 (GHKG…PSLS), 745 to 784 (PATS…LDPL), and 790 to 829 (NPGI…TVLE).

Part of the multisubunit axonemal dynein complex formed at least of two heavy chains and a number of intermediate and light chains. Associated with axonemal dynein subunits such as, DNAH2, DNAI3, and DYNLT1. Interacts with DYNLT1.

It is found in the cytoplasm. Its subcellular location is the cytoskeleton. The protein resides in the flagellum axoneme. The protein localises to the cilium axoneme. It localises to the dynein axonemal particle. Functionally, plays a critical role in the assembly of axonemal dynein complex, thereby playing a role in ciliary motility. The sequence is that of Dynein axonemal intermediate chain 4 from Homo sapiens (Human).